The following is a 245-amino-acid chain: 1-(5-phosphoribosyl)-5-[(5-phosphoribosylamino)methylideneamino] imidazole-4-carboxamide isomerase (245 aa).

Asp-7 (proton acceptor) is an active-site residue. Asp-129 serves as the catalytic Proton donor.

Belongs to the HisA/HisF family.

It localises to the cytoplasm. The catalysed reaction is 1-(5-phospho-beta-D-ribosyl)-5-[(5-phospho-beta-D-ribosylamino)methylideneamino]imidazole-4-carboxamide = 5-[(5-phospho-1-deoxy-D-ribulos-1-ylimino)methylamino]-1-(5-phospho-beta-D-ribosyl)imidazole-4-carboxamide. It functions in the pathway amino-acid biosynthesis; L-histidine biosynthesis; L-histidine from 5-phospho-alpha-D-ribose 1-diphosphate: step 4/9. The polypeptide is 1-(5-phosphoribosyl)-5-[(5-phosphoribosylamino)methylideneamino] imidazole-4-carboxamide isomerase (Shewanella halifaxensis (strain HAW-EB4)).